The following is a 369-amino-acid chain: Spore membrane assembly protein 2 (369 aa).

Residues 1 to 6 (MLFPKR) are Cytoplasmic-facing. The chain crosses the membrane as a helical span at residues 7–27 (LIVWGVLLILSLSQFVLYLPA). At 28-220 (TTCTNSKGLR…NLAFILMMFN (193 aa)) the chain is on the lumenal side. A helical transmembrane segment spans residues 221 to 241 (GMVFYFAVLEIIVGFLSICVV). The Cytoplasmic segment spans residues 242 to 265 (SAFGGALSVGKRHRLFPILLKSSS). A helical transmembrane segment spans residues 266–286 (SILVVIATLTILCNIVYLIAL). Over 287–319 (KTLEPEEVTDVGSDNAAVHTTGWELLKVNVGSG) the chain is Lumenal. Residues 320-340 (FIMGLARYAIQWVLLVLAFLA) form a helical membrane-spanning segment. Residues 341-369 (ANHYKAKPKKSDKYTEDTSNSPSPDLMEK) lie on the Cytoplasmic side of the membrane. A disordered region spans residues 348–369 (PKKSDKYTEDTSNSPSPDLMEK).

The protein belongs to the SMA2 family.

It localises to the prospore membrane. Its subcellular location is the endoplasmic reticulum. Involved in spore and ascus formation. Required for the efficient assembly of the precursors of the prospore membrane to a continuous prospore membrane. This is Spore membrane assembly protein 2 (SMA2) from Saccharomyces cerevisiae (strain YJM789) (Baker's yeast).